The chain runs to 480 residues: Glutathione reductase (480 aa).

Residues Ser-31 and Gly-32 each contribute to the FAD site. Ser-31 is a glutathione binding site. Residue Arg-38 participates in glutathione binding. Residues Glu-51, Thr-58, Cys-59, and Lys-67 each coordinate FAD. Cys-59 and Cys-64 are joined by a disulfide. Tyr-121 is a binding site for glutathione. Ala-137 is a binding site for FAD. The NADP(+) site is built by Ile-206, Glu-209, Arg-226, and Gly-291. An FAD-binding site is contributed by Asp-331. Glu-337 contacts NADP(+). Thr-339 is a binding site for FAD. Glutathione is bound at residue Arg-347. Residue Val-372 participates in NADP(+) binding. Lys-422 lines the glutathione pocket. His-469 contacts FAD. Residue His-469 is the Proton acceptor of the active site.

The protein belongs to the class-I pyridine nucleotide-disulfide oxidoreductase family. As to quaternary structure, homodimer. FAD is required as a cofactor.

The protein localises to the cytoplasm. Its subcellular location is the mitochondrion. The enzyme catalyses 2 glutathione + NADP(+) = glutathione disulfide + NADPH + H(+). Catalyzes the reduction of glutathione disulfide (GSSG) to reduced glutathione (GSH). Constitutes the major mechanism to maintain a high GSH:GSSG ratio in the cytosol. This chain is Glutathione reductase (GLR1), found in Eremothecium gossypii (strain ATCC 10895 / CBS 109.51 / FGSC 9923 / NRRL Y-1056) (Yeast).